The chain runs to 591 residues: L-fucose isomerase (591 aa).

Active-site proton acceptor residues include Glu-337 and Asp-361. Mn(2+) is bound by residues Glu-337, Asp-361, and His-528.

This sequence belongs to the L-fucose isomerase family. In terms of assembly, homohexamer. Mn(2+) serves as cofactor.

Its subcellular location is the cytoplasm. It catalyses the reaction L-fucose = L-fuculose. It participates in carbohydrate degradation; L-fucose degradation; L-lactaldehyde and glycerone phosphate from L-fucose: step 1/3. Converts the aldose L-fucose into the corresponding ketose L-fuculose. The sequence is that of L-fucose isomerase from Salmonella arizonae (strain ATCC BAA-731 / CDC346-86 / RSK2980).